A 260-amino-acid polypeptide reads, in one-letter code: uncharacterized protein (260 aa).

Residues 1–22 (MGYIKRIGLYISIFILIVMVAG) form the signal peptide. A lipid anchor (N-palmitoyl cysteine) is attached at C23. The S-diacylglycerol cysteine moiety is linked to residue C23.

Belongs to the staphylococcal tandem lipoprotein family.

It is found in the cell membrane. This is an uncharacterized protein from Staphylococcus aureus (strain bovine RF122 / ET3-1).